A 1105-amino-acid polypeptide reads, in one-letter code: MPGLAMDGPSAMASRATVADMHYDPASASQQANGGIYRNGIGKKSHSPVDGLHDSHIGCLHELPPELSHITLGFFPFNNLISRVVQQSWNDLNELLNEMGSSQAYQTGISSQLSATKNGMSEKFRGDQATENSLKKLRILEFTHSRRAEFIKLLVLSQWSRQANEVSRLIDIQAFIRMRSGFYEAALFHIGNMKQNLIVAQLANPDLKTASHVLSAGKIDALHGLEFLSPRPLAPSQVLRLLRGINKLIDMRLALHDHVPDSLQNYFVHDGRVTFIVPNEFEIDLSVASAAPSAQFFLVDMKFLFFPSSLPKGRLRSIVDHQVNSTLMNAGLVGCFNLLHNLILTHKITILFKQAIDLARTYWSEHLRVELFHRTLVLQYWSKKPGGKSWIEIGVHSGLKGSPQSTGTTTSFLQLRWFRDNEEVSATDIDFNLTFLSAKSILFSAISLHITHILRTAFEALRQNRLYCLGGLYIGMSASSKEPGDCYLELQMTQTSHLDIMVEAVSGDTVLRVAPSPITRYDTEIIVDRGSVEDIVERVSRLRCVSALEEVERYAKAVGWMPLNLRHVNLESLKRIFPPSALRSMLLFRAKCWEPSWLAVFTSAMDGDNWWIVQLQTQNPPALQSHWRLLEAQRAKLITGWFTGWLGRLHNASFSSLLSALSGMIMVQCNVDFLNEIGAIHFFPPPKDLLLQPCLRVPSIYLRLRHDDFPSQFRTIFSGGSPRRSFIDETFRISYKGIDQQSGHAITMVYGRLMTDIDMFGALYAKSVQDIAFQPKGRGFAILFRTPVGTPIIAPLLERLQQMNNIAFVVESMKSQGFQPHSLSPLRIKFSYPTQGELRGSIKFIYHDQGSHFESKLLFPATTTKPILHPRIGIDFNYQNPHRRITESLSTILNSHKDGMSLVLELINITLPLLVTLERICAEEYIDNAWCFRAQYTARSARLYQIRYPFLRYRFNVSASQRKSYVVWVIQNSTPGPERSKHPSLELRLKDQIYNSQGDGWRGINQGAMAYSANVSRLVFDLHQLMKSYISQMAKSNQRGEPTDSSPSAGCEFGRYLPKNENKKGHIQTTTAPTLEHAYGNSNMVVQSVRQGEAAARDVDVIAID.

Residues 28-48 (ASQQANGGIYRNGIGKKSHSP) are disordered.

The protein belongs to the Mediator complex subunit 14 family. Component of the Mediator complex.

The protein localises to the nucleus. In terms of biological role, component of the Mediator complex, a coactivator involved in the regulated transcription of nearly all RNA polymerase II-dependent genes. Mediator functions as a bridge to convey information from gene-specific regulatory proteins to the basal RNA polymerase II transcription machinery. Mediator is recruited to promoters by direct interactions with regulatory proteins and serves as a scaffold for the assembly of a functional preinitiation complex with RNA polymerase II and the general transcription factors. The protein is Mediator of RNA polymerase II transcription subunit 14 (RGR1) of Coccidioides immitis (strain RS) (Valley fever fungus).